The chain runs to 144 residues: Small ribosomal subunit protein eS19 (144 aa).

This sequence belongs to the eukaryotic ribosomal protein eS19 family.

This chain is Small ribosomal subunit protein eS19 (RPS19), found in Argopecten irradians (Bay scallop).